The primary structure comprises 377 residues: NADP-dependent oxidoreductase lnbE (377 aa).

NADP(+)-binding positions include 170–173, 257–263, and 293–295; these read GGNG, LTNPRVS, and SPV.

Belongs to the NADP-dependent oxidoreductase L4BD family.

Its pathway is secondary metabolite biosynthesis. NADP-dependent oxidoreductase; part of the lnb gene cluster that mediates the biosynthesis of diastereomeric piperazines. Lna and lnb clusters encode sets of enzymes that produce overlapping sets of previously undescribed metabolites such as piperazinomycin-like metabolites or morpholine. The lna and lnb biosynthetic pathways appear to be part of a signaling network that controls the formation of sclerotia, a resilient overwintering structure. One primary function of the non-canonical nonribosomal peptide synthetases lnaA and lnbA consists in the reduction of L-tyrosine. The presence in the clusters of tailoring enzymes such as the oxidoreductases lnaB, lnbB, lnaE or lnbE, as well as of the cytochrome P450 monooxygenases lnaC, lnaD, or lnbC, might explain formation of various diastereomeric piperazines. The sequence is that of NADP-dependent oxidoreductase lnbE from Aspergillus flavus (strain ATCC 200026 / FGSC A1120 / IAM 13836 / NRRL 3357 / JCM 12722 / SRRC 167).